Reading from the N-terminus, the 172-residue chain is Ribosome maturation factor RimM (172 aa).

Residues 97 to 170 form the PRC barrel domain; it reads ENEFYFHEII…KITIEVMEGL (74 aa).

This sequence belongs to the RimM family. As to quaternary structure, binds ribosomal protein uS19.

It is found in the cytoplasm. Its function is as follows. An accessory protein needed during the final step in the assembly of 30S ribosomal subunit, possibly for assembly of the head region. Essential for efficient processing of 16S rRNA. May be needed both before and after RbfA during the maturation of 16S rRNA. It has affinity for free ribosomal 30S subunits but not for 70S ribosomes. The protein is Ribosome maturation factor RimM of Listeria innocua serovar 6a (strain ATCC BAA-680 / CLIP 11262).